The following is a 229-amino-acid chain: Trehalose-6-phosphate phosphatase-related protein (229 aa).

Aspartate 5 serves as the catalytic Nucleophile. Mg(2+) is bound by residues aspartate 5, aspartate 7, and aspartate 177. 5–7 (DYD) serves as a coordination point for substrate.

The protein belongs to the trehalose phosphatase family. Mg(2+) is required as a cofactor.

The catalysed reaction is alpha,alpha-trehalose 6-phosphate + H2O = alpha,alpha-trehalose + phosphate. The protein operates within glycan biosynthesis; trehalose biosynthesis. Removes the phosphate from trehalose 6-phosphate (Tre6P) to produce free trehalose. Also catalyzes the dephosphorylation of para-nitrophenyl phosphate (pNPP), but with lesser efficiency (in vitro). The sequence is that of Trehalose-6-phosphate phosphatase-related protein from Thermoplasma acidophilum (strain ATCC 25905 / DSM 1728 / JCM 9062 / NBRC 15155 / AMRC-C165).